We begin with the raw amino-acid sequence, 225 residues long: J-type co-chaperone jac1, mitochondrial (225 aa).

A mitochondrion-targeting transit peptide spans methionine 1–histidine 49. One can recognise a J domain in the interval asparagine 61–leucine 137. The HSP70 binding signature appears at histidine 98–aspartate 100.

It belongs to the HscB family. As to quaternary structure, interacts with ssc1.

The protein localises to the mitochondrion matrix. In terms of biological role, co-chaperone required for the assembly of iron-sulfur (Fe/S) clusters in mitochondria. Stimulates the ATPase activity of the mitochondrial Hsp70 chaperone ssc1, to mediate the transfer of iron-sulfur clusters from isu1 to grx5. In Schizosaccharomyces pombe (strain 972 / ATCC 24843) (Fission yeast), this protein is J-type co-chaperone jac1, mitochondrial.